A 99-amino-acid polypeptide reads, in one-letter code: Sperm protein associated with the nucleus on the X chromosome N4 (99 aa).

Residues 1 to 10 (MEEPTSSTNE) are compositionally biased toward polar residues. The interval 1 to 99 (MEEPTSSTNE…AGSPQDGGQN (99 aa)) is disordered. The span at 11–22 (NKMKSPCESNKR) shows a compositional bias: basic and acidic residues. A compositionally biased stretch (basic residues) spans 23 to 32 (KVDKKKKNLH). The span at 64-78 (SNQLENNQPTESSTD) shows a compositional bias: polar residues.

This sequence belongs to the SPAN-X family.

This Homo sapiens (Human) protein is Sperm protein associated with the nucleus on the X chromosome N4 (SPANXN4).